The primary structure comprises 340 residues: Protein-tyrosine-phosphatase PTP1 (340 aa).

One can recognise a Tyrosine-protein phosphatase domain in the interval 58 to 326 (IAHEFTGLQA…FFCYNAIVDE (269 aa)). Substrate contacts are provided by residues Asp234, 265 to 271 (CSAGIGR), and Gln311. The active-site Phosphocysteine intermediate is Cys265.

As to quaternary structure, interacts with MPK6. Interacts with KIN10. Phosphorylated by KIN10. In terms of tissue distribution, expressed in roots, stems and flowers, and at low levels in leaves.

Its subcellular location is the cytoplasm. It is found in the cytosol. The protein localises to the nucleus. The enzyme catalyses O-phospho-L-tyrosyl-[protein] + H2O = L-tyrosyl-[protein] + phosphate. Its activity is regulated as follows. Inhibited by hydrogen peroxide. Its function is as follows. Protein-tyrosine-phosphatase that dephosphorylates and probably inhibits MPK6 in non-oxidative stress conditions. In association with MKP1, represses salicylic acid (SA) and camalexin biosynthesis, thus modulating defense response. May also repress MPK3. Dephosphorylates and inactivates MPK4 in vitro. This chain is Protein-tyrosine-phosphatase PTP1 (PTP1), found in Arabidopsis thaliana (Mouse-ear cress).